Reading from the N-terminus, the 698-residue chain is Probable xyloglucan glycosyltransferase 2 (698 aa).

2 helical membrane passes run Gly124 to Trp144 and Ile190 to Ile210. Asp272 is an active-site residue. Substrate-binding residues include Asp331 and Asp333. Asp425 is a catalytic residue. Helical transmembrane passes span Leu503–Val523, Leu528–Ser548, Leu653–Leu668, and Ile673–Ile693.

Belongs to the glycosyltransferase 2 family. Plant cellulose synthase-like C subfamily.

The protein localises to the golgi apparatus membrane. Functionally, probable beta-1,4-glucan synthase rather involved in the synthesis of the xyloglucan backbone than cellulose. Seems to work simultaneously with xyloglucan 6-xylosyltransferase. Xyloglucan is a noncellulosic polysaccharides of plant cell wall and consists of a glucan backbone substituted by xylose, galactose and fucose. In Oryza sativa subsp. japonica (Rice), this protein is Probable xyloglucan glycosyltransferase 2 (CSLC2).